Consider the following 366-residue polypeptide: Phospho-N-acetylmuramoyl-pentapeptide-transferase (366 aa).

10 helical membrane-spanning segments follow: residues 3 to 23 (QIFI…PVLI), 55 to 75 (IAIL…GLVF), 80 to 100 (PGVS…VGFA), 118 to 138 (AKLI…LQFP), 161 to 181 (IAVG…NIVI), 197 to 217 (LASG…FWQF), 235 to 255 (PLDL…FLWW), 262 to 282 (IFMG…LSIT), 287 to 307 (LLMI…VIQV), and 341 to 361 (FWLL…GEWL).

It belongs to the glycosyltransferase 4 family. MraY subfamily. It depends on Mg(2+) as a cofactor.

The protein resides in the cell membrane. It catalyses the reaction UDP-N-acetyl-alpha-D-muramoyl-L-alanyl-gamma-D-glutamyl-meso-2,6-diaminopimeloyl-D-alanyl-D-alanine + di-trans,octa-cis-undecaprenyl phosphate = di-trans,octa-cis-undecaprenyl diphospho-N-acetyl-alpha-D-muramoyl-L-alanyl-D-glutamyl-meso-2,6-diaminopimeloyl-D-alanyl-D-alanine + UMP. The protein operates within cell wall biogenesis; peptidoglycan biosynthesis. Catalyzes the initial step of the lipid cycle reactions in the biosynthesis of the cell wall peptidoglycan: transfers peptidoglycan precursor phospho-MurNAc-pentapeptide from UDP-MurNAc-pentapeptide onto the lipid carrier undecaprenyl phosphate, yielding undecaprenyl-pyrophosphoryl-MurNAc-pentapeptide, known as lipid I. This is Phospho-N-acetylmuramoyl-pentapeptide-transferase from Corynebacterium urealyticum (strain ATCC 43042 / DSM 7109).